A 344-amino-acid chain; its full sequence is GDSL esterase/lipase At2g19010 (344 aa).

Positions 1–21 are cleaved as a signal peptide; sequence MSKACWLVAAIIFTAATVVYG. The active-site Nucleophile is the Ser33. N-linked (GlcNAc...) asparagine glycosylation is present at Asn303. Catalysis depends on residues Asp311 and His314.

It belongs to the 'GDSL' lipolytic enzyme family.

Its subcellular location is the secreted. This is GDSL esterase/lipase At2g19010 from Arabidopsis thaliana (Mouse-ear cress).